The primary structure comprises 128 residues: Holo-[acyl-carrier-protein] synthase (128 aa).

2 residues coordinate Mg(2+): Asp8 and Glu58.

Belongs to the P-Pant transferase superfamily. AcpS family. The cofactor is Mg(2+).

The protein localises to the cytoplasm. The enzyme catalyses apo-[ACP] + CoA = holo-[ACP] + adenosine 3',5'-bisphosphate + H(+). Functionally, transfers the 4'-phosphopantetheine moiety from coenzyme A to a Ser of acyl-carrier-protein. The sequence is that of Holo-[acyl-carrier-protein] synthase from Alkalilimnicola ehrlichii (strain ATCC BAA-1101 / DSM 17681 / MLHE-1).